The sequence spans 384 residues: WD repeat-containing protein 55 (384 aa).

The interval 1 to 33 (MDPTCQESPAEDSNNEEDLDSTKAAPRIRDTPE) is disordered. Acidic residues predominate over residues 9–19 (PAEDSNNEEDL). WD repeat units follow at residues 36 to 75 (VLEAPASGLAFHPTRDLLAAGDVDGDVFVFAYSCQEGETK), 82 to 121 (HHLKSCRAVVFSEDGQKLVTVSKDKAIHVLDVEQGQLERR), 125 to 163 (AHSAPINSLLLVDENVLVTGDDTGGIRLWDQRKEGPLMD), 166 to 205 (QHEEYIADMALDPAKKLLLTASGDGCLGVFNIKRRRFELL), 208 to 247 (PQSGDLTSVALMKYGKKVACGSSEGTIYLFNWNGFGATSD), 250 to 289 (ALRAESIDCMVPVTENLLCTGSTDGIIRAVNILPNRVVGT), and 293 to 332 (HAGEPVEELALSHCGHFLASSGHDQRLKFWDMTQLRTVVV). Residues Ser354 and Ser383 each carry the phosphoserine modification. A disordered region spans residues 362–384 (LREDEEEAKAPEEVSGESDDDSD). Over residues 375 to 384 (VSGESDDDSD) the composition is skewed to acidic residues.

This sequence belongs to the WD repeat WDR55 family.

It localises to the nucleus. The protein localises to the nucleolus. It is found in the cytoplasm. Its function is as follows. Nucleolar protein that acts as a modulator of rRNA synthesis. Plays a central role during organogenesis. In Rattus norvegicus (Rat), this protein is WD repeat-containing protein 55 (Wdr55).